A 190-amino-acid chain; its full sequence is Frataxin homolog, mitochondrial (190 aa).

It belongs to the frataxin family. As to quaternary structure, monomer (probable predominant form). Oligomer. Interacts with IscU. Component of the mitochondrial core iron-sulfur cluster (ISC) assembly complex at least composed of the cysteine desulfurase Nfs1, the scaffold protein IscU, the accessory protein bcn92/Isd11/Lyrm4, and probably fh/frataxin.

The protein localises to the mitochondrion. The enzyme catalyses 4 Fe(2+) + O2 + 4 H(+) = 4 Fe(3+) + 2 H2O. Its function is as follows. Promotes the biosynthesis of heme as well as the assembly and repair of iron-sulfur clusters by delivering Fe(2+) to proteins involved in these pathways. May play a role in the protection against iron-catalyzed oxidative stress through its ability to catalyze the oxidation of Fe(2+) to Fe(3+). May be able to store large amounts of the metal in the form of a ferrihydrite mineral by oligomerization. Required for ecdysteroidogenesis in the prothoracic gland which is necessary for larval to pupal transition. This is Frataxin homolog, mitochondrial from Drosophila melanogaster (Fruit fly).